We begin with the raw amino-acid sequence, 340 residues long: Phosphate carrier protein, mitochondrial (340 aa).

A mitochondrion-targeting transit peptide spans 1-27 (MSVFSQLAESSKQNPFSLPVRSGNCAS). Solcar repeat units follow at residues 41–125 (KYYA…FKNV), 138–222 (YRTS…TVEA), and 239–317 (EQLV…VKVA). 6 helical membrane passes run 47 to 67 (ALGGVLSCGITHTAIVPLDLV), 95 to 114 (RALVKGWAPTLLGYSAQGLG), 141 to 161 (SLYLAASASAEFFADILLAPM), 200 to 220 (PLWMRQIPYTMMKFACFEKTV), 241 to 261 (LVVTFVAGYIAGVFCAIVSHP), and 297 to 317 (IIMIGTLTALQWFIYDSVKVA).

This sequence belongs to the mitochondrial carrier (TC 2.A.29) family.

It localises to the mitochondrion inner membrane. Its function is as follows. Transport of phosphate groups from the cytosol to the mitochondrial matrix. In Caenorhabditis elegans, this protein is Phosphate carrier protein, mitochondrial.